A 208-amino-acid polypeptide reads, in one-letter code: Small ribosomal subunit protein uS4 (208 aa).

In terms of domain architecture, S4 RNA-binding spans 98 to 160 (SRLDNVAYNM…AKSYLRIKSS (63 aa)).

This sequence belongs to the universal ribosomal protein uS4 family. In terms of assembly, part of the 30S ribosomal subunit. Contacts protein S5. The interaction surface between S4 and S5 is involved in control of translational fidelity.

Functionally, one of the primary rRNA binding proteins, it binds directly to 16S rRNA where it nucleates assembly of the body of the 30S subunit. In terms of biological role, with S5 and S12 plays an important role in translational accuracy. This chain is Small ribosomal subunit protein uS4, found in Nitrosomonas eutropha (strain DSM 101675 / C91 / Nm57).